We begin with the raw amino-acid sequence, 86 residues long: Small ribosomal subunit protein bS16 (86 aa).

It belongs to the bacterial ribosomal protein bS16 family.

The polypeptide is Small ribosomal subunit protein bS16 (Trichormus variabilis (strain ATCC 29413 / PCC 7937) (Anabaena variabilis)).